The following is a 346-amino-acid chain: 3-dehydroquinate synthase (346 aa).

Residues 62-67 (DGEEYK), 96-100 (GVISD), 120-121 (TT), K133, K142, and 160-163 (FLRT) contribute to the NAD(+) site. Residues E175, H234, and H251 each coordinate Zn(2+).

This sequence belongs to the sugar phosphate cyclases superfamily. Dehydroquinate synthase family. The cofactor is Co(2+). Zn(2+) is required as a cofactor. NAD(+) serves as cofactor.

It localises to the cytoplasm. It catalyses the reaction 7-phospho-2-dehydro-3-deoxy-D-arabino-heptonate = 3-dehydroquinate + phosphate. The protein operates within metabolic intermediate biosynthesis; chorismate biosynthesis; chorismate from D-erythrose 4-phosphate and phosphoenolpyruvate: step 2/7. Functionally, catalyzes the conversion of 3-deoxy-D-arabino-heptulosonate 7-phosphate (DAHP) to dehydroquinate (DHQ). The polypeptide is 3-dehydroquinate synthase (Campylobacter curvus (strain 525.92)).